We begin with the raw amino-acid sequence, 108 residues long: V-type proton ATPase subunit G (108 aa).

Basic and acidic residues predominate over residues 48-60 (YASKKEEEFKKSE). The segment at 48–89 (YASKKEEEFKKSESQASGIYSQAEAESKKQVQDTFASIETSS) is disordered. A compositionally biased stretch (polar residues) spans 79–89 (QDTFASIETSS).

Belongs to the V-ATPase G subunit family. In terms of assembly, V-ATPase is a heteromultimeric enzyme composed of a peripheral catalytic V1 complex (components A to H) attached to an integral membrane V0 proton pore complex (components: a, c, c', c'', d, e, f and VOA1).

The protein resides in the vacuole membrane. In terms of biological role, subunit of the V1 complex of vacuolar(H+)-ATPase (V-ATPase), a multisubunit enzyme composed of a peripheral complex (V1) that hydrolyzes ATP and a membrane integral complex (V0) that translocates protons. V-ATPase is responsible for acidifying and maintaining the pH of intracellular compartments. In Schizosaccharomyces pombe (strain 972 / ATCC 24843) (Fission yeast), this protein is V-type proton ATPase subunit G (vma10).